The chain runs to 448 residues: N-succinylarginine dihydrolase (448 aa).

Residues 19-28, Asn-110, and 137-138 contribute to the substrate site; these read GGLSYGNVAS and HR. Residue Glu-174 is part of the active site. Arg-214 contributes to the substrate binding site. His-250 is an active-site residue. 2 residues coordinate substrate: Asp-252 and Asn-365. Cys-371 acts as the Nucleophile in catalysis.

Belongs to the succinylarginine dihydrolase family. As to quaternary structure, homodimer.

It carries out the reaction N(2)-succinyl-L-arginine + 2 H2O + 2 H(+) = N(2)-succinyl-L-ornithine + 2 NH4(+) + CO2. It functions in the pathway amino-acid degradation; L-arginine degradation via AST pathway; L-glutamate and succinate from L-arginine: step 2/5. Its function is as follows. Catalyzes the hydrolysis of N(2)-succinylarginine into N(2)-succinylornithine, ammonia and CO(2). The sequence is that of N-succinylarginine dihydrolase from Ectopseudomonas mendocina (strain ymp) (Pseudomonas mendocina).